The sequence spans 671 residues: Probable serine/threonine-protein kinase DDB_G0286627 (671 aa).

The 253-residue stretch at 31–283 (WVIERQLSKG…SHQLIKHPFF (253 aa)) folds into the Protein kinase domain. ATP contacts are provided by residues 37-45 (LSKGSFGQV) and lysine 61. Aspartate 148 acts as the Proton acceptor in catalysis. The chain crosses the membrane as a helical span at residues 369–389 (FKIIYLFLILLFLMTILVNLN). The disordered stretch occupies residues 410–523 (PESNPIKKPS…PPVTETPKPT (114 aa)). Residues 427-490 (NQYSEGSQSS…PTDSSTTDPP (64 aa)) show a composition bias toward low complexity. Residues 491 to 513 (VTDPPITDPPITDPPVTDPPITE) show a composition bias toward pro residues.

The protein belongs to the protein kinase superfamily. STE Ser/Thr protein kinase family. Requires Mg(2+) as cofactor.

The protein localises to the membrane. The enzyme catalyses L-seryl-[protein] + ATP = O-phospho-L-seryl-[protein] + ADP + H(+). It catalyses the reaction L-threonyl-[protein] + ATP = O-phospho-L-threonyl-[protein] + ADP + H(+). This is Probable serine/threonine-protein kinase DDB_G0286627 from Dictyostelium discoideum (Social amoeba).